Consider the following 512-residue polypeptide: GMP synthase [glutamine-hydrolyzing] (512 aa).

A Glutamine amidotransferase type-1 domain is found at 7-197 (TIIVLDFGSQ…VFGVCGCSEG (191 aa)). C84 (nucleophile) is an active-site residue. Residues H171 and E173 contribute to the active site. The 190-residue stretch at 198 to 387 (WNMENFIEVE…LGIPDEIVWR (190 aa)) folds into the GMPS ATP-PPase domain. Residue 225–231 (SGGVDSS) coordinates ATP.

As to quaternary structure, homodimer.

The catalysed reaction is XMP + L-glutamine + ATP + H2O = GMP + L-glutamate + AMP + diphosphate + 2 H(+). It functions in the pathway purine metabolism; GMP biosynthesis; GMP from XMP (L-Gln route): step 1/1. In terms of biological role, catalyzes the synthesis of GMP from XMP. The sequence is that of GMP synthase [glutamine-hydrolyzing] from Bacillus mycoides (strain KBAB4) (Bacillus weihenstephanensis).